Consider the following 276-residue polypeptide: CASP-like protein 4A3 (276 aa).

A compositionally biased stretch (polar residues) spans 1–13; sequence MPSMSPSSISTEK. The segment at 1–76 is disordered; it reads MPSMSPSSIS…PVKIEETPSP (76 aa). Over 1–126 the chain is Cytoplasmic; the sequence is MPSMSPSSIS…RRSRREEIVK (126 aa). The span at 43 to 72 shows a compositional bias: basic and acidic residues; the sequence is SLDHSSDSEKEDEKRRPESRRNKNPVKIEE. The helical transmembrane segment at 127–147 threads the bilayer; it reads FVALGFRLSEVVLALISFSIM. Topologically, residues 148 to 167 are extracellular; it reads AADKTKGWSGDSFDRYKEYR. A helical transmembrane segment spans residues 168-188; it reads FCLSVNVVAFIYASFQACDLA. The Cytoplasmic portion of the chain corresponds to 189 to 205; it reads YHLVKEKHLISHHLRPL. The helical transmembrane segment at 206–226 threads the bilayer; sequence FEFIIDQVLAYLLMCASTAAV. Residues 227–244 lie on the Extracellular side of the membrane; that stretch reads TRVDDWVSNWGKDDFTEM. The helical transmembrane segment at 245–265 threads the bilayer; sequence ASASIAMSFLTFLAFAFSSLI. The Cytoplasmic portion of the chain corresponds to 266 to 276; sequence SGYNLFNQDSL.

Belongs to the Casparian strip membrane proteins (CASP) family. As to quaternary structure, homodimer and heterodimers.

The protein resides in the cell membrane. The sequence is that of CASP-like protein 4A3 from Arabidopsis lyrata subsp. lyrata (Lyre-leaved rock-cress).